We begin with the raw amino-acid sequence, 155 residues long: Small ribosomal subunit protein uS7c (155 aa).

It belongs to the universal ribosomal protein uS7 family. As to quaternary structure, part of the 30S ribosomal subunit.

It is found in the plastid. The protein resides in the chloroplast. Its function is as follows. One of the primary rRNA binding proteins, it binds directly to 16S rRNA where it nucleates assembly of the head domain of the 30S subunit. This Cornus mas (Cornelian cherry dogwood) protein is Small ribosomal subunit protein uS7c (rps7).